Here is a 928-residue protein sequence, read N- to C-terminus: Mitogen-activated protein kinase kinase kinase dlk-1 (928 aa).

The segment at 1–72 (MTSTTMVTTL…GQKEGSPDPK (72 aa)) is disordered. Residues 42–52 (LVTQSAPNTPI) show a composition bias toward polar residues. Residues 53-69 (QHREQANAEFGQKEGSP) show a composition bias toward basic and acidic residues. The region spanning 135 to 377 (ISELEWLGSG…FSHIRQHWEI (243 aa)) is the Protein kinase domain. ATP is bound by residues 141–149 (LGSGSQGAV) and Lys-162. The active-site Proton acceptor is the Asp-246. Positions 459-480 (LQGCFTELKLKESELAEWEKDL) are leucine-zipper. Disordered stretches follow at residues 483–575 (REQW…DAIR), 644–696 (RRVS…PSRN), and 802–845 (ENAN…SMES). Positions 509 to 519 (GYDDMSSDEDV) are enriched in acidic residues. A compositionally biased stretch (low complexity) spans 530–557 (SNTSSSSGVQSSPFSRQSSSRSSAGQQT). An important for interaction between isoform a and isoform c region spans residues 605-814 (SAGAGSCTAI…NDVDLTSSMD (210 aa)). Residues 647-656 (STSVNKSTAV) show a composition bias toward polar residues. Over residues 677-695 (SCSSPRSSSKLNRSSYPSR) the composition is skewed to low complexity. A compositionally biased stretch (acidic residues) spans 823-833 (ADVESSEEDEG). Ser-874 and Ser-878 each carry phosphoserine. Positions 874 to 879 (SDGLSD) match the SDGLSD hexapeptide motif.

It belongs to the protein kinase superfamily. STE Ser/Thr protein kinase family. MAP kinase kinase kinase subfamily. As to quaternary structure, homooligomer (via leucine zipper domain and hexapeptide motif). Isoform a (via leucine zipper domain) forms a heterooligomer with isoform c (via leucine zipper domain). Isoform c does not self-associate. It depends on Mg(2+) as a cofactor. Post-translationally, ubiquitinated by rpm-1. Negatively regulated by ubiquitination by fsn-1 bound rpm-1, followed by degradation. In terms of processing, phosphorylation at Ser-874 and/or at Ser-878 abolishes interaction with isoform c and promotes binding to isoform a kinase domain (likely in trans) resulting in isoform a self-association and activation. In terms of tissue distribution, expressed in nerve ring, nerve cord, neurons, and pharynx.

It is found in the synapse. The protein resides in the cytoplasm. It localises to the cell projection. The protein localises to the axon. Its subcellular location is the dendrite. It is found in the cilium. It carries out the reaction L-seryl-[protein] + ATP = O-phospho-L-seryl-[protein] + ADP + H(+). The catalysed reaction is L-threonyl-[protein] + ATP = O-phospho-L-threonyl-[protein] + ADP + H(+). Inactive when associated with isoform c. Dissociation from isoform c, which is dependent on the phosphorylation of the C-terminal hexapeptide, results in self-association and activation. Transient increase in Ca(2+) levels caused by axonal injury or synaptic activity triggers the dissociation of isoform a from isoform c; the dissociation may be influenced by the phosphorylation status of the C-terminal hexapeptide. Functionally, component of a MAP kinase pathway that functions presynaptically to regulate synaptic architecture and presynaptic differentiation. Phosphorylates and activates mkk-4. Has a role in axonal regrowth following injury and synaptogenesis. Plays a role in modulating polymerization of neuronal microtubules. Also promotes tubulin post-translational modifications that protect microtubules. Plays a role in cilium length regulation, possibly by reducing rab-5 mediated endocytosis, and may also have a role in intraflagellar transport in cilia. Plays a role in the formation of muscle connections, also called muscle arm extensions, between the body wall and the motor axons in the dorsal and ventral cord. Its function is as follows. Has a role in synapse and axon development, and in axonal regrowth following injury. By forming heterooligomers with isoform a, acts as an inhibitor of isoform a activation. Its inhibitory function is independent of its catalytic activity. In Caenorhabditis elegans, this protein is Mitogen-activated protein kinase kinase kinase dlk-1 (dlk-1).